Here is a 349-residue protein sequence, read N- to C-terminus: Phenylalanine--tRNA ligase alpha subunit (349 aa).

Mg(2+) is bound at residue Glu-258.

This sequence belongs to the class-II aminoacyl-tRNA synthetase family. Phe-tRNA synthetase alpha subunit type 1 subfamily. In terms of assembly, tetramer of two alpha and two beta subunits. Requires Mg(2+) as cofactor.

It localises to the cytoplasm. The catalysed reaction is tRNA(Phe) + L-phenylalanine + ATP = L-phenylalanyl-tRNA(Phe) + AMP + diphosphate + H(+). The protein is Phenylalanine--tRNA ligase alpha subunit of Rickettsia canadensis (strain McKiel).